Consider the following 302-residue polypeptide: Quinolinate synthase (302 aa).

Iminosuccinate contacts are provided by His-24 and Ser-41. Residue Cys-86 coordinates [4Fe-4S] cluster. Iminosuccinate contacts are provided by residues 112–114 and Ser-129; that span reads YVN. A [4Fe-4S] cluster-binding site is contributed by Cys-171. Iminosuccinate-binding positions include 197–199 and Thr-214; that span reads HPE. Residue Cys-259 participates in [4Fe-4S] cluster binding.

Belongs to the quinolinate synthase family. Type 2 subfamily. It depends on [4Fe-4S] cluster as a cofactor.

It is found in the cytoplasm. The catalysed reaction is iminosuccinate + dihydroxyacetone phosphate = quinolinate + phosphate + 2 H2O + H(+). Its pathway is cofactor biosynthesis; NAD(+) biosynthesis; quinolinate from iminoaspartate: step 1/1. Its function is as follows. Catalyzes the condensation of iminoaspartate with dihydroxyacetone phosphate to form quinolinate. This is Quinolinate synthase from Dehalococcoides mccartyi (strain CBDB1).